Consider the following 149-residue polypeptide: Arginine repressor (149 aa).

Belongs to the ArgR family.

Its subcellular location is the cytoplasm. Its pathway is amino-acid biosynthesis; L-arginine biosynthesis [regulation]. In terms of biological role, regulates arginine biosynthesis genes. The sequence is that of Arginine repressor from Bacillus cereus (strain ATCC 10987 / NRS 248).